We begin with the raw amino-acid sequence, 380 residues long: Chaperone protein DnaJ (380 aa).

Residues 5-70 (DYYEILGVAK…QKRAAYDQYG (66 aa)) form the J domain. A CR-type zinc finger spans residues 135–213 (GVSKEIRIPT…CHGHGRVEKS (79 aa)). Residues Cys-148, Cys-151, Cys-165, Cys-168, Cys-187, Cys-190, Cys-201, and Cys-204 each coordinate Zn(2+). CXXCXGXG motif repeat units lie at residues 148–155 (CGVCHGSG), 165–172 (CSTCHGAG), 187–194 (CPTCHGRG), and 201–208 (CNACHGHG).

The protein belongs to the DnaJ family. In terms of assembly, homodimer. Requires Zn(2+) as cofactor.

It is found in the cytoplasm. Participates actively in the response to hyperosmotic and heat shock by preventing the aggregation of stress-denatured proteins and by disaggregating proteins, also in an autonomous, DnaK-independent fashion. Unfolded proteins bind initially to DnaJ; upon interaction with the DnaJ-bound protein, DnaK hydrolyzes its bound ATP, resulting in the formation of a stable complex. GrpE releases ADP from DnaK; ATP binding to DnaK triggers the release of the substrate protein, thus completing the reaction cycle. Several rounds of ATP-dependent interactions between DnaJ, DnaK and GrpE are required for fully efficient folding. Also involved, together with DnaK and GrpE, in the DNA replication of plasmids through activation of initiation proteins. The polypeptide is Chaperone protein DnaJ (Erwinia tasmaniensis (strain DSM 17950 / CFBP 7177 / CIP 109463 / NCPPB 4357 / Et1/99)).